Reading from the N-terminus, the 452-residue chain is NADH-quinone oxidoreductase subunit N 2 (452 aa).

A run of 14 helical transmembrane segments spans residues 6-26 (VLIP…YGFI), 33-53 (TYIL…FNFG), 70-90 (TLRI…YSDL), 97-117 (SVEY…MIVA), 120-140 (LLIL…LAGF), 154-174 (YFIL…FFYA), 194-214 (ILLG…LAPF), 232-252 (FLST…FLSI), 258-278 (IQDL…VLAL), 286-306 (MLAY…LLPE), 311-331 (ISLI…FAFI), 355-375 (FCII…GFIV), 387-407 (GYGS…FYYL), and 432-452 (ALSG…LLIF).

It belongs to the complex I subunit 2 family. NDH-1 is composed of 14 different subunits. Subunits NuoA, H, J, K, L, M, N constitute the membrane sector of the complex.

Its subcellular location is the cell inner membrane. It catalyses the reaction a quinone + NADH + 5 H(+)(in) = a quinol + NAD(+) + 4 H(+)(out). In terms of biological role, NDH-1 shuttles electrons from NADH, via FMN and iron-sulfur (Fe-S) centers, to quinones in the respiratory chain. The immediate electron acceptor for the enzyme in this species is believed to be ubiquinone. Couples the redox reaction to proton translocation (for every two electrons transferred, four hydrogen ions are translocated across the cytoplasmic membrane), and thus conserves the redox energy in a proton gradient. The polypeptide is NADH-quinone oxidoreductase subunit N 2 (Thermodesulfovibrio yellowstonii (strain ATCC 51303 / DSM 11347 / YP87)).